Consider the following 67-residue polypeptide: Potassium channel toxin alpha-KTx (67 aa).

The signal sequence occupies residues 1–25; it reads MKNIAMKTTVVLTILLLSVLTAINA. Positions 26–31 are excised as a propeptide; that stretch reads DTMKKR. 4 cysteine pairs are disulfide-bonded: Cys35-Cys54, Cys40-Cys59, Cys44-Cys61, and Cys49-Cys64.

It belongs to the short scorpion toxin superfamily. Potassium channel inhibitor family. As to expression, expressed by the venom gland.

The protein localises to the secreted. In terms of biological role, blocks Kv1.1/KCNA1, Kv1.2/KCNA2 and Kv1.3/KCNA3 voltage-gated potassium channels. This chain is Potassium channel toxin alpha-KTx, found in Hoffmannihadrurus gertschi (Scorpion).